The chain runs to 123 residues: Holo-[acyl-carrier-protein] synthase (123 aa).

Positions 8 and 56 each coordinate Mg(2+).

The protein belongs to the P-Pant transferase superfamily. AcpS family. Mg(2+) serves as cofactor.

Its subcellular location is the cytoplasm. The enzyme catalyses apo-[ACP] + CoA = holo-[ACP] + adenosine 3',5'-bisphosphate + H(+). In terms of biological role, transfers the 4'-phosphopantetheine moiety from coenzyme A to a Ser of acyl-carrier-protein. This chain is Holo-[acyl-carrier-protein] synthase, found in Clostridium botulinum (strain Alaska E43 / Type E3).